The primary structure comprises 426 residues: Histidine--tRNA ligase (426 aa).

It belongs to the class-II aminoacyl-tRNA synthetase family. In terms of assembly, homodimer.

The protein resides in the cytoplasm. It carries out the reaction tRNA(His) + L-histidine + ATP = L-histidyl-tRNA(His) + AMP + diphosphate + H(+). This Geobacillus kaustophilus (strain HTA426) protein is Histidine--tRNA ligase.